The sequence spans 287 residues: Protease HtpX (287 aa).

Helical transmembrane passes span isoleucine 4–isoleucine 24 and glycine 33–isoleucine 53. Histidine 139 lines the Zn(2+) pocket. Glutamate 140 is a catalytic residue. Residue histidine 143 participates in Zn(2+) binding. 2 consecutive transmembrane segments (helical) span residues leucine 154–isoleucine 174 and alanine 195–phenylalanine 215. Residue glutamate 220 coordinates Zn(2+).

It belongs to the peptidase M48B family. Zn(2+) serves as cofactor.

It localises to the cell inner membrane. This Shewanella loihica (strain ATCC BAA-1088 / PV-4) protein is Protease HtpX.